We begin with the raw amino-acid sequence, 820 residues long: Serine/threonine-protein phosphatase 4 regulatory subunit 3-B (820 aa).

The WH1 domain maps to 1-100 (MSDTRRRVKV…DEIWEKICQV (100 aa)). The span at 682–694 (ELWFNEDDEEEGE) shows a compositional bias: acidic residues. Disordered stretches follow at residues 682–711 (ELWFNEDDEEEGEAVVPPVEKTKPEDDFPE) and 750–820 (AANG…RLGS). The segment covering 701–711 (EKTKPEDDFPE) has biased composition (basic and acidic residues). 2 stretches are compositionally biased toward polar residues: residues 750–761 (AANGANSTNSKS) and 768–790 (PATSNGSSSKNTSLTTTVASTKG). Residues 798–809 (YPDDEDEEEEED) show a composition bias toward acidic residues.

The protein belongs to the SMEK family. Serine/threonine-protein phosphatase 4 (PP4) occurs in different assemblies of the catalytic and one or more regulatory subunits.

Its function is as follows. Regulatory subunit of serine/threonine-protein phosphatase 4 (PP4). In Xenopus laevis (African clawed frog), this protein is Serine/threonine-protein phosphatase 4 regulatory subunit 3-B.